Here is a 71-residue protein sequence, read N- to C-terminus: MNKKQLNFEKSLKKLEEIVSEIENADPDLDKALALFAEGAELIKSCLAKLNETKKKIEVIISSGKTEFFKE.

Belongs to the XseB family. Heterooligomer composed of large and small subunits.

Its subcellular location is the cytoplasm. It catalyses the reaction Exonucleolytic cleavage in either 5'- to 3'- or 3'- to 5'-direction to yield nucleoside 5'-phosphates.. Its function is as follows. Bidirectionally degrades single-stranded DNA into large acid-insoluble oligonucleotides, which are then degraded further into small acid-soluble oligonucleotides. In Endomicrobium trichonymphae, this protein is Exodeoxyribonuclease 7 small subunit.